Consider the following 310-residue polypeptide: 4-hydroxyproline 2-epimerase (310 aa).

The active-site Proton acceptor is the Cys88. Substrate-binding positions include 89-90 (GH), His208, and Asp232. Catalysis depends on Cys236, which acts as the Proton donor. Substrate is bound at residue 237–238 (GT).

It belongs to the proline racemase family.

The catalysed reaction is trans-4-hydroxy-L-proline = cis-4-hydroxy-D-proline. Catalyzes the epimerization of trans-4-hydroxy-L-proline (t4LHyp) to cis-4-hydroxy-D-proline (c4DHyp). Is likely involved in a degradation pathway that converts t4LHyp to alpha-ketoglutarate. Displays no proline racemase activity. This chain is 4-hydroxyproline 2-epimerase, found in Acinetobacter baumannii (strain ATCC 17978 / DSM 105126 / CIP 53.77 / LMG 1025 / NCDC KC755 / 5377).